We begin with the raw amino-acid sequence, 579 residues long: MNASKLPLGSFVGTTLLLFILYKLVKLAYYVGQAKKTGLPYTLVPVLETEFLGKLLTPLIRPLFTSRLSRGEGWPRWIRFSILDWAWEEKRRVHEELGDVFLLVSPEGLICYTADADMCWDVMNRRNEFLKPRDKYKVLEPYGPNVATTEGKAYNFHVRITAPPFNDGSGANDLVWNEASDQARALMESWSQENTTRDLSLDINRLTLAVISYTGFGKRLDFETEVSDLRNKIPPGYKMSLHHALHLVTTFMVKILLIPKWIMKMTSMKEIAIAHGELEKYMREMIRTETAKLSKDSEYQSADAKGNLLTSVLRASAFEAKAAGRKQAFSEDEVLGNLFLYLLAGYETTANAMTYGFITLALRQDLQDRIIQEVDGVYAEAAAEGRTSLNYTDDFEKFQYTYGFMYEVFRLYPGVCIITKMVPKDTTITVYPENNSPQQHVLPAECRVYLNVNAVHYHERYWPDPWALKPDRWMGTIGVTPNSRPNKKVVAQDKSRQVRGTLMTFSGGARACLGRKFTQSEYISVLATVLGKYRIVLGEGMDAKVVKQEIDHLAAGTVTLAPLKYVKLALKKRTDVKTG.

N-linked (GlcNAc...) asparagine glycosylation is present at asparagine 2. The helical transmembrane segment at 7–29 threads the bilayer; it reads PLGSFVGTTLLLFILYKLVKLAY. Residues asparagine 194 and asparagine 390 are each glycosylated (N-linked (GlcNAc...) asparagine). Cysteine 512 is a heme binding site.

This sequence belongs to the cytochrome P450 family. Heme serves as cofactor.

The protein resides in the membrane. It participates in sesquiterpene biosynthesis. In terms of biological role, cytochrome P450 monooxygenase; part of the gene cluster that mediates the biosynthesis of PR-toxin, a bicyclic sesquiterpene belonging to the eremophilane class and acting as a mycotoxin. The first step of the pathway is catalyzed by the aristolochene synthase which performs the cyclization of trans,trans-farnesyl diphosphate (FPP) to the bicyclic sesquiterpene aristolochene. Following the formation of aristolochene, the non-oxygenated aristolochene is converted to the trioxygenated intermediate eremofortin B, via 7-epi-neopetasone. This conversion appears to involve three enzymes, a hydroxysterol oxidase-like enzyme, the quinone-oxidase prx3 that forms the quinone-type-structure in the bicyclic nucleus of aristolochene with the C8-oxo group and the C-3 hydroxyl group, and the P450 monooxygenase ORF6 that introduces the epoxide at the double bond between carbons 1 and 2. No monoxy or dioxy-intermediates have been reported to be released to the broth, so these three early oxidative reactions may be coupled together. Eremofortin B is further oxidized by another P450 monooxygenase, that introduces a second epoxide between carbons 7 and 11 prior to acetylation to eremofortin A by the acetyltransferase ORF8. The second epoxidation may be performed by a second P450 monooxygenase. After the acetylation step, eremofortin A is converted to eremofortin C and then to PR-toxin. First the conversion of eremofortin A to eremofortin C proceeds by oxidation of the side chain of the molecule at C-12 and is catalyzed by the short-chain oxidoreductase prx1. The cytochrome P450 monooxygenase ORF6 is probably also involved in this step. The primary alcohol formed at C-12 is finally oxidized by the short-chain alcohol dehydrogenase prx4 that forms PR-toxin. The protein is Cytochrome P450 monooxygenase ORF6 of Penicillium roqueforti (strain FM164).